A 113-amino-acid chain; its full sequence is Putative membrane protein insertion efficiency factor (113 aa).

This sequence belongs to the UPF0161 family.

It is found in the cell inner membrane. In terms of biological role, could be involved in insertion of integral membrane proteins into the membrane. The protein is Putative membrane protein insertion efficiency factor of Campylobacter jejuni subsp. doylei (strain ATCC BAA-1458 / RM4099 / 269.97).